Reading from the N-terminus, the 169-residue chain is Nucleoside diphosphate kinase 3 (169 aa).

The ADP site is built by Lys29, Arg105, Thr111, Arg122, Val129, and Asn132. The Pros-phosphohistidine intermediate role is filled by His135.

It belongs to the NDK family. Homohexamer. Mg(2+) is required as a cofactor.

It is found in the mitochondrion outer membrane. Its subcellular location is the cytoplasm. It localises to the cytoskeleton. The protein resides in the cilium basal body. The enzyme catalyses a 2'-deoxyribonucleoside 5'-diphosphate + ATP = a 2'-deoxyribonucleoside 5'-triphosphate + ADP. The catalysed reaction is a ribonucleoside 5'-diphosphate + ATP = a ribonucleoside 5'-triphosphate + ADP. Functionally, catalyzes the phosphorylation of ribonucleosides and deoxyribonucleoside diphosphates, other than ATP, into the corresponding triphosphates with ATP as the major phosphate donor. The ATP gamma phosphate is transferred to the nucleoside diphosphate beta phosphate via a ping-pong mechanism, using a phosphorylated active-site intermediate. Through the catalyzed exchange of gamma-phosphate between di- and triphosphonucleosides participates in regulation of intracellular nucleotide homeostasis. Required for ciliary function during renal development. Independently of its kinase activity, facilitates mitochondrial tethering prior to membrane fusion through its direct membrane-binding and hexamerization. Implicated in repair of both single- and double-stranded breaks in DNA, independently of its kinase activity. The protein is Nucleoside diphosphate kinase 3 of Danio rerio (Zebrafish).